A 275-amino-acid polypeptide reads, in one-letter code: NH(3)-dependent NAD(+) synthetase (275 aa).

50–57 (GISGGVDS) is a binding site for ATP. Mg(2+) is bound at residue Asp56. Deamido-NAD(+) is bound at residue Arg147. ATP is bound at residue Thr167. Residue Glu172 coordinates Mg(2+). Residues Lys180 and Asp187 each coordinate deamido-NAD(+). ATP is bound by residues Lys196 and Thr218. 267 to 268 (HK) contacts deamido-NAD(+).

This sequence belongs to the NAD synthetase family. In terms of assembly, homodimer.

It carries out the reaction deamido-NAD(+) + NH4(+) + ATP = AMP + diphosphate + NAD(+) + H(+). It functions in the pathway cofactor biosynthesis; NAD(+) biosynthesis; NAD(+) from deamido-NAD(+) (ammonia route): step 1/1. Catalyzes the ATP-dependent amidation of deamido-NAD to form NAD. Uses ammonia as a nitrogen source. This is NH(3)-dependent NAD(+) synthetase from Pseudomonas aeruginosa (strain LESB58).